The sequence spans 123 residues: Small ribosomal subunit protein cS23 (123 aa).

Belongs to the chloroplast-specific ribosomal protein cS23 family. As to quaternary structure, part of the 30S ribosomal subunit.

Its subcellular location is the plastid. It is found in the chloroplast. Probably a ribosomal protein or a ribosome-associated protein. This Mesostigma viride (Green alga) protein is Small ribosomal subunit protein cS23 (ycf65).